A 33-amino-acid polypeptide reads, in one-letter code: Protamine TP14 (33 aa).

A disordered region spans residues 1 to 33 (MPRRRRSSRPPVRRRRRPRVSRRRRRRGGRRRR).

As to expression, testis.

The protein localises to the nucleus. Its subcellular location is the chromosome. In terms of biological role, protamines substitute for histones in the chromatin of sperm during the haploid phase of spermatogenesis. They compact sperm DNA into a highly condensed, stable and inactive complex. This Oncorhynchus mykiss (Rainbow trout) protein is Protamine TP14.